Consider the following 79-residue polypeptide: Darcynin (79 aa).

This sequence belongs to the darcynin family.

The protein is Darcynin of Chromobacterium violaceum (strain ATCC 12472 / DSM 30191 / JCM 1249 / CCUG 213 / NBRC 12614 / NCIMB 9131 / NCTC 9757 / MK).